Reading from the N-terminus, the 295-residue chain is Pyridoxal 5'-phosphate synthase subunit PdxS (295 aa).

D-ribose 5-phosphate is bound at residue Asp-25. The active-site Schiff-base intermediate with D-ribose 5-phosphate is Lys-82. Gly-154 lines the D-ribose 5-phosphate pocket. Arg-166 provides a ligand contact to D-glyceraldehyde 3-phosphate. D-ribose 5-phosphate is bound by residues Gly-215 and Gly-236–Ser-237.

Belongs to the PdxS/SNZ family. As to quaternary structure, in the presence of PdxT, forms a dodecamer of heterodimers.

The enzyme catalyses aldehydo-D-ribose 5-phosphate + D-glyceraldehyde 3-phosphate + L-glutamine = pyridoxal 5'-phosphate + L-glutamate + phosphate + 3 H2O + H(+). It participates in cofactor biosynthesis; pyridoxal 5'-phosphate biosynthesis. Functionally, catalyzes the formation of pyridoxal 5'-phosphate from ribose 5-phosphate (RBP), glyceraldehyde 3-phosphate (G3P) and ammonia. The ammonia is provided by the PdxT subunit. Can also use ribulose 5-phosphate and dihydroxyacetone phosphate as substrates, resulting from enzyme-catalyzed isomerization of RBP and G3P, respectively. This is Pyridoxal 5'-phosphate synthase subunit PdxS from Bacillus mycoides (strain KBAB4) (Bacillus weihenstephanensis).